The chain runs to 215 residues: 3-demethoxyubiquinol 3-hydroxylase (215 aa).

The disordered stretch occupies residues 26–47 (PSSAHSQRPSPAVVQPEHKMSE). Fe cation contacts are provided by Glu-64, Glu-94, His-97, Glu-146, Glu-178, and His-181.

It belongs to the COQ7 family. The cofactor is Fe cation.

It is found in the cell membrane. The catalysed reaction is a 5-methoxy-2-methyl-3-(all-trans-polyprenyl)benzene-1,4-diol + AH2 + O2 = a 3-demethylubiquinol + A + H2O. It functions in the pathway cofactor biosynthesis; ubiquinone biosynthesis. In terms of biological role, catalyzes the hydroxylation of 2-nonaprenyl-3-methyl-6-methoxy-1,4-benzoquinol during ubiquinone biosynthesis. The chain is 3-demethoxyubiquinol 3-hydroxylase from Pseudomonas syringae pv. syringae (strain B728a).